A 460-amino-acid polypeptide reads, in one-letter code: G2/mitotic-specific cyclin-4 (460 aa).

This sequence belongs to the cyclin family. Cyclin AB subfamily.

In terms of biological role, essential for the control of the cell cycle at the G2/M (mitosis) transition. Interacts with the CDC2 protein kinase to form MPF. G2/M cyclins accumulate steadily during G2 and are abruptly destroyed at mitosis. The chain is G2/mitotic-specific cyclin-4 (CLB4) from Saccharomyces cerevisiae (strain ATCC 204508 / S288c) (Baker's yeast).